Consider the following 160-residue polypeptide: Cytochrome b6-f complex subunit 4 (160 aa).

Transmembrane regions (helical) follow at residues 36-56 (LLYI…GLAV), 95-115 (LLGV…PFLE), and 131-151 (TVFL…TLPI).

The protein belongs to the cytochrome b family. PetD subfamily. In terms of assembly, the 4 large subunits of the cytochrome b6-f complex are cytochrome b6, subunit IV (17 kDa polypeptide, petD), cytochrome f and the Rieske protein, while the 4 small subunits are petG, petL, petM and petN. The complex functions as a dimer.

The protein resides in the plastid. Its subcellular location is the chloroplast thylakoid membrane. Functionally, component of the cytochrome b6-f complex, which mediates electron transfer between photosystem II (PSII) and photosystem I (PSI), cyclic electron flow around PSI, and state transitions. The chain is Cytochrome b6-f complex subunit 4 from Oryza nivara (Indian wild rice).